A 253-amino-acid chain; its full sequence is Probable transcriptional regulatory protein AM1_1847 (253 aa).

The protein belongs to the TACO1 family.

The protein localises to the cytoplasm. This chain is Probable transcriptional regulatory protein AM1_1847, found in Acaryochloris marina (strain MBIC 11017).